The chain runs to 446 residues: Glucose-6-phosphate isomerase (446 aa).

Residue Glu287 is the Proton donor of the active site. Catalysis depends on residues His308 and Lys422.

Belongs to the GPI family.

The protein localises to the cytoplasm. It catalyses the reaction alpha-D-glucose 6-phosphate = beta-D-fructose 6-phosphate. It functions in the pathway carbohydrate biosynthesis; gluconeogenesis. Its pathway is carbohydrate degradation; glycolysis; D-glyceraldehyde 3-phosphate and glycerone phosphate from D-glucose: step 2/4. Catalyzes the reversible isomerization of glucose-6-phosphate to fructose-6-phosphate. The polypeptide is Glucose-6-phosphate isomerase (Lactobacillus helveticus (strain DPC 4571)).